Consider the following 355-residue polypeptide: Peptide chain release factor 1 (355 aa).

Position 233 is an N5-methylglutamine (Gln233).

It belongs to the prokaryotic/mitochondrial release factor family. Post-translationally, methylated by PrmC. Methylation increases the termination efficiency of RF1.

The protein localises to the cytoplasm. In terms of biological role, peptide chain release factor 1 directs the termination of translation in response to the peptide chain termination codons UAG and UAA. The chain is Peptide chain release factor 1 from Desulfitobacterium hafniense (strain DSM 10664 / DCB-2).